The primary structure comprises 328 residues: D-cysteine desulfhydrase (328 aa).

Lys51 carries the post-translational modification N6-(pyridoxal phosphate)lysine.

Belongs to the ACC deaminase/D-cysteine desulfhydrase family. In terms of assembly, homodimer. Pyridoxal 5'-phosphate serves as cofactor.

It carries out the reaction D-cysteine + H2O = hydrogen sulfide + pyruvate + NH4(+) + H(+). Catalyzes the alpha,beta-elimination reaction of D-cysteine and of several D-cysteine derivatives. It could be a defense mechanism against D-cysteine. The chain is D-cysteine desulfhydrase from Escherichia coli O157:H7.